The chain runs to 231 residues: Lipoprotein-releasing system ATP-binding protein LolD (231 aa).

The ABC transporter domain maps to 9–230 (FSLKDVGKEY…LRAGELYDQN (222 aa)). 45-52 (GASGSGKS) is an ATP binding site.

It belongs to the ABC transporter superfamily. Lipoprotein translocase (TC 3.A.1.125) family. As to quaternary structure, the complex is composed of two ATP-binding proteins (LolD) and two transmembrane proteins (LolC and LolE).

The protein resides in the cell inner membrane. Functionally, part of the ABC transporter complex LolCDE involved in the translocation of mature outer membrane-directed lipoproteins, from the inner membrane to the periplasmic chaperone, LolA. Responsible for the formation of the LolA-lipoprotein complex in an ATP-dependent manner. The sequence is that of Lipoprotein-releasing system ATP-binding protein LolD from Oleidesulfovibrio alaskensis (strain ATCC BAA-1058 / DSM 17464 / G20) (Desulfovibrio alaskensis).